A 943-amino-acid polypeptide reads, in one-letter code: Valine--tRNA ligase (943 aa).

Positions 45–55 match the 'HIGH' region motif; it reads PNVTGTLHMGH. The 'KMSKS' region signature appears at 541 to 545; it reads KMSKS. Position 544 (Lys544) interacts with ATP. Residues 875–934 adopt a coiled-coil conformation; it reads IDVAAERIRLAKEIEKLEKQISIAQGKLANEGFVARAPAAVIDQEKQRVADFTATLEQLK.

The protein belongs to the class-I aminoacyl-tRNA synthetase family. ValS type 1 subfamily. As to quaternary structure, monomer.

It is found in the cytoplasm. It catalyses the reaction tRNA(Val) + L-valine + ATP = L-valyl-tRNA(Val) + AMP + diphosphate. In terms of biological role, catalyzes the attachment of valine to tRNA(Val). As ValRS can inadvertently accommodate and process structurally similar amino acids such as threonine, to avoid such errors, it has a 'posttransfer' editing activity that hydrolyzes mischarged Thr-tRNA(Val) in a tRNA-dependent manner. The polypeptide is Valine--tRNA ligase (Dechloromonas aromatica (strain RCB)).